The chain runs to 194 residues: SSVNARPCSSPLVCPAKGENFFGVGNVARIRRLPPHLAWCSIDWDQLCLLHLLGSGGFGSVYKAIYHGATVAVKKVKRCSKNHLASRQSFWAELNVARLGHNNVVRIVAASTCTPASQDSLGTIIMEYAGNCTLHHVIYGTGYLTGNNSDSLKCDHGFLSTAQAVIYSHDIVAGLMFLHSQLIVHLDLKPANIF.

Residues 47-194 form the Protein kinase domain; sequence LCLLHLLGSG…HLDLKPANIF (148 aa). ATP is bound by residues 53–61 and Lys74; that span reads LGSGGFGSV. Asp187 (proton acceptor) is an active-site residue.

Belongs to the protein kinase superfamily. Ser/Thr protein kinase family.

The catalysed reaction is L-seryl-[protein] + ATP = O-phospho-L-seryl-[protein] + ADP + H(+). It carries out the reaction L-threonyl-[protein] + ATP = O-phospho-L-threonyl-[protein] + ADP + H(+). This is Serine/threonine-protein kinase mos (MOS) from Atheris squamigera (Variable bush viper).